Consider the following 85-residue polypeptide: ATP synthase subunit c (85 aa).

Transmembrane regions (helical) follow at residues 10–30 (IAVALLIGLGALGTAIGFGLL) and 53–73 (FIVAGLLDAVTMIGVGIALFF).

This sequence belongs to the ATPase C chain family. In terms of assembly, F-type ATPases have 2 components, F(1) - the catalytic core - and F(0) - the membrane proton channel. F(1) has five subunits: alpha(3), beta(3), gamma(1), delta(1), epsilon(1). F(0) has three main subunits: a(1), b(2) and c(10-14). The alpha and beta chains form an alternating ring which encloses part of the gamma chain. F(1) is attached to F(0) by a central stalk formed by the gamma and epsilon chains, while a peripheral stalk is formed by the delta and b chains.

It localises to the cell inner membrane. Its function is as follows. F(1)F(0) ATP synthase produces ATP from ADP in the presence of a proton or sodium gradient. F-type ATPases consist of two structural domains, F(1) containing the extramembraneous catalytic core and F(0) containing the membrane proton channel, linked together by a central stalk and a peripheral stalk. During catalysis, ATP synthesis in the catalytic domain of F(1) is coupled via a rotary mechanism of the central stalk subunits to proton translocation. Functionally, key component of the F(0) channel; it plays a direct role in translocation across the membrane. A homomeric c-ring of between 10-14 subunits forms the central stalk rotor element with the F(1) delta and epsilon subunits. This Pseudomonas aeruginosa (strain LESB58) protein is ATP synthase subunit c.